We begin with the raw amino-acid sequence, 145 residues long: MKLHELKYTEGSKKDVTRVGRGMASGKGKTSTRGHKGQNSRSGGGVRVGFEGGQTPLYRRLPKIGFTSPNQKEYVILNLSDLERLNLALIDHKVLVEQKIIKNEKQLVKVLGKGSITSAINVKLNKVSKSAQAEIEKLGGKVEVI.

Residues 1-18 show a composition bias toward basic and acidic residues; the sequence is MKLHELKYTEGSKKDVTR. Positions 1–51 are disordered; sequence MKLHELKYTEGSKKDVTRVGRGMASGKGKTSTRGHKGQNSRSGGGVRVGFE. Over residues 42–51 the composition is skewed to gly residues; the sequence is SGGGVRVGFE.

It belongs to the universal ribosomal protein uL15 family. As to quaternary structure, part of the 50S ribosomal subunit.

Functionally, binds to the 23S rRNA. This Mesoplasma florum (strain ATCC 33453 / NBRC 100688 / NCTC 11704 / L1) (Acholeplasma florum) protein is Large ribosomal subunit protein uL15.